Consider the following 484-residue polypeptide: 1,4-beta-D-glucan cellobiohydrolase CEL6A (484 aa).

A signal peptide spans 1–17; sequence MAKRLLLTAALAATTLA. The 37-residue stretch at 26–62 folds into the CBM1 domain; it reads NCGSVWSQCGGQGWTGATCCASGSTCVAQNQWYSQCL. 2 disulfides stabilise this stretch: cysteine 34/cysteine 51 and cysteine 45/cysteine 61. The segment at 68–98 is disordered; that stretch reads TTTAQAPSSTRTTTSSSSRPTSSSISTSAVN. Substrate is bound by residues tryptophan 171 and aspartate 173. Asparagine 175 carries N-linked (GlcNAc...) asparagine glycosylation. The segment at 208–230 is substrate binding loop 1; it reads YDLPDRDCAAAASNGEWAIADGG. Aspartate 260 (proton donor) is an active-site residue. Histidine 305, tryptophan 308, asparagine 344, tryptophan 405, lysine 433, and glutamate 437 together coordinate substrate. The tract at residues 431-469 is substrate binding loop 2; sequence WIKPGGECDGTSDTTAARYDHHCGFADALKPAPEAGQWF. The Proton acceptor role is filled by aspartate 439.

It belongs to the glycosyl hydrolase 6 (cellulase B) family. Monomer. Both N- and O-glycosylated.

The protein resides in the secreted. The catalysed reaction is Hydrolysis of (1-&gt;4)-beta-D-glucosidic linkages in cellulose and cellotetraose, releasing cellobiose from the non-reducing ends of the chains.. In terms of biological role, exoglucanase that plays an important function in biomass degradation by catalyzing the hydrolysis of the non-reducing end beta-1,4-glucosidic linkages in cellulose and cellotetraose to release cellobiose. Hydrolyzes crystalline and amorphous cellulose but is inactive on hydroxyethyl cellulose, mannan, galactomannan, xyloglucan, arabinoxylan, arabinan, xylan, and pectin. The protein is 1,4-beta-D-glucan cellobiohydrolase CEL6A of Podospora anserina (strain S / ATCC MYA-4624 / DSM 980 / FGSC 10383) (Pleurage anserina).